The following is a 125-amino-acid chain: N-alpha-acetyltransferase 38, NatC auxiliary subunit (125 aa).

A disordered region spans residues 1-42 (MAGAGPTMLLREENGCCSRRQSSSSAGDSDGEQEDSPATRAR). An N-acetylalanine modification is found at A2. Over residues 18 to 28 (SRRQSSSSAGD) the composition is skewed to low complexity. Phosphoserine is present on residues S22, S25, and S29. In terms of domain architecture, Sm spans 40-118 (RARQQLEALL…IVSIEVQRES (79 aa)).

This sequence belongs to the snRNP Sm proteins family. As to quaternary structure, component of the N-terminal acetyltransferase C (NatC) complex, which is composed of NAA35, NAA38 and NAA30.

The protein localises to the cytoplasm. The protein resides in the nucleus. In terms of biological role, auxillary component of the N-terminal acetyltransferase C (NatC) complex which catalyzes acetylation of N-terminal methionine residues. N-terminal acetylation protects proteins from ubiquitination and degradation by the N-end rule pathway. The polypeptide is N-alpha-acetyltransferase 38, NatC auxiliary subunit (Naa38) (Mus musculus (Mouse)).